Reading from the N-terminus, the 310-residue chain is tRNA dimethylallyltransferase (310 aa).

Position 13–20 (13–20 (GPTASGKT)) interacts with ATP. A substrate-binding site is contributed by 15–20 (TASGKT). Interaction with substrate tRNA regions lie at residues 38 to 41 (DSAL), 162 to 166 (QRLSR), 243 to 248 (RCVGYR), and 276 to 283 (KRQITWLR).

The protein belongs to the IPP transferase family. Monomer. Mg(2+) serves as cofactor.

The enzyme catalyses adenosine(37) in tRNA + dimethylallyl diphosphate = N(6)-dimethylallyladenosine(37) in tRNA + diphosphate. Catalyzes the transfer of a dimethylallyl group onto the adenine at position 37 in tRNAs that read codons beginning with uridine, leading to the formation of N6-(dimethylallyl)adenosine (i(6)A). The polypeptide is tRNA dimethylallyltransferase (Aliivibrio fischeri (strain MJ11) (Vibrio fischeri)).